The primary structure comprises 203 residues: Holliday junction branch migration complex subunit RuvA (203 aa).

The tract at residues 1–64 (MIGRLRGIIL…EDAQLLYGFN (64 aa)) is domain I. A domain II region spans residues 65 to 142 (NKQERMLFRE…KGLHGDLFTP (78 aa)). A flexible linker region spans residues 143–154 (AADLVLTSPNGP). The domain III stretch occupies residues 155-203 (TSDDAEQEAVAALVALGYKPQEASRMVSKIAKPDANSETLIREALRAAL).

The protein belongs to the RuvA family. In terms of assembly, homotetramer. Forms an RuvA(8)-RuvB(12)-Holliday junction (HJ) complex. HJ DNA is sandwiched between 2 RuvA tetramers; dsDNA enters through RuvA and exits via RuvB. An RuvB hexamer assembles on each DNA strand where it exits the tetramer. Each RuvB hexamer is contacted by two RuvA subunits (via domain III) on 2 adjacent RuvB subunits; this complex drives branch migration. In the full resolvosome a probable DNA-RuvA(4)-RuvB(12)-RuvC(2) complex forms which resolves the HJ.

Its subcellular location is the cytoplasm. In terms of biological role, the RuvA-RuvB-RuvC complex processes Holliday junction (HJ) DNA during genetic recombination and DNA repair, while the RuvA-RuvB complex plays an important role in the rescue of blocked DNA replication forks via replication fork reversal (RFR). RuvA specifically binds to HJ cruciform DNA, conferring on it an open structure. The RuvB hexamer acts as an ATP-dependent pump, pulling dsDNA into and through the RuvAB complex. HJ branch migration allows RuvC to scan DNA until it finds its consensus sequence, where it cleaves and resolves the cruciform DNA. This is Holliday junction branch migration complex subunit RuvA from Enterobacter sp. (strain 638).